The following is a 1944-amino-acid chain: Anaphase-promoting complex subunit 1 (1944 aa).

Serine 51, serine 60, serine 202, and serine 286 each carry phosphoserine. At threonine 291 the chain carries Phosphothreonine. The segment at 305–343 (LRSLSKGDSPVTSPFQNYSSIHSQSRSTSSPSLHSRSPS) is disordered. 7 positions are modified to phosphoserine: serine 313, serine 341, serine 343, serine 355, serine 362, serine 373, and serine 377. The span at 323 to 343 (SSIHSQSRSTSSPSLHSRSPS) shows a compositional bias: low complexity. The tract at residues 373 to 396 (SHNQSPKRHSISHSPNSNSNGSFL) is disordered. The segment covering 384–394 (SHSPNSNSNGS) has biased composition (low complexity). Threonine 537 is modified (phosphothreonine). Serine 547 and serine 555 each carry phosphoserine. Residue tyrosine 571 is modified to Phosphotyrosine. 3 positions are modified to phosphoserine: serine 686, serine 688, and serine 916. The tract at residues 994–1016 (KGKSVLSSDVPSGTETEEEDDGM) is disordered. Residues 998-1007 (VLSSDVPSGT) show a composition bias toward polar residues. PC repeat units lie at residues 1297–1325 (AAGL…PEQL), 1366–1404 (GATL…PEFL), 1467–1501 (GACL…YLSA), and 1520–1552 (LLSL…EMNY).

Belongs to the APC1 family. In terms of assembly, the mammalian APC/C is composed at least of 14 distinct subunits ANAPC1, ANAPC2, CDC27/APC3, ANAPC4, ANAPC5, CDC16/APC6, ANAPC7, CDC23/APC8, ANAPC10, ANAPC11, CDC26/APC12, ANAPC13, ANAPC15 and ANAPC16 that assemble into a complex of at least 19 chains with a combined molecular mass of around 1.2 MDa; APC/C interacts with FZR1 and FBXO5. Post-translationally, phosphorylated. Phosphorylation on Ser-355 occurs specifically during mitosis.

Its pathway is protein modification; protein ubiquitination. Its function is as follows. Component of the anaphase promoting complex/cyclosome (APC/C), a cell cycle-regulated E3 ubiquitin ligase that controls progression through mitosis and the G1 phase of the cell cycle. The APC/C complex acts by mediating ubiquitination and subsequent degradation of target proteins: it mainly mediates the formation of 'Lys-11'-linked polyubiquitin chains and, to a lower extent, the formation of 'Lys-48'- and 'Lys-63'-linked polyubiquitin chains. The APC/C complex catalyzes assembly of branched 'Lys-11'-/'Lys-48'-linked branched ubiquitin chains on target proteins. The polypeptide is Anaphase-promoting complex subunit 1 (ANAPC1) (Homo sapiens (Human)).